The chain runs to 90 residues: Protein Z600 (90 aa).

Phosphothreonine occurs at positions 22 and 48. Positions 46 to 65 are disordered; that stretch reads PATPSSSGHGKFQTELKKRR.

In terms of assembly, component of the Frs-CycA-Cdk1 complex composed of Z600, CycA and Cdk1. Interacts preferentially with CycA (via C-terminus) but is also able to interact (via C-terminus) with CycE (via C-terminus).

It localises to the nucleus. Cell cycle regulator that is involved in modulating and adjusting cell proliferation according to the requirements of the developmental program. Interacts with mitotic Cdk1-cyclin complexes to inhibit mitotic entry at the G2/M transition. Likely to function by binding to the hydrophobic patch of cyclins to interfere with the interaction between the complex and certain Cdk1 substrates. At the mid-blastula transition, involved in the cell cycle arrest in G2 of cycle 14 by delaying mitosis and thus reducing cell proliferation allowing cell fate specification and morphogenesis to take place. Acts downstream or in parallel to the checkpoint regulator grp which is also required for the cell cycle pause at cycle 14. During gastrulation, delays mitosis in the ventral region of the embryonic mesoderm thus allowing invagination to be completed before cell division takes place. This chain is Protein Z600, found in Drosophila melanogaster (Fruit fly).